The chain runs to 178 residues: MFDATTILAYKGKNKAVIGGDGQVTFGNTVLKGNATKIRTLYKDQILAGFAGSTADAFNLFDMFEGHLEACKGDLLKSVIAFSKEWRKDKVLRRLEAMMIVLNKEKIFILSGNGDVVEPEDGAIASIGSGGNFAISAARALAKHSSLDEEELVKESLMIAGELCIYTNQNIKILKLED.

The active site involves T5. Na(+) contacts are provided by G161, C164, and T167.

Belongs to the peptidase T1B family. HslV subfamily. As to quaternary structure, a double ring-shaped homohexamer of HslV is capped on each side by a ring-shaped HslU homohexamer. The assembly of the HslU/HslV complex is dependent on binding of ATP.

It localises to the cytoplasm. The catalysed reaction is ATP-dependent cleavage of peptide bonds with broad specificity.. Its activity is regulated as follows. Allosterically activated by HslU binding. Protease subunit of a proteasome-like degradation complex believed to be a general protein degrading machinery. The polypeptide is ATP-dependent protease subunit HslV (Aliarcobacter butzleri (strain RM4018) (Arcobacter butzleri)).